A 410-amino-acid chain; its full sequence is Transcription factor Dp-1 (410 aa).

Lysine 3 bears the N6-acetyllysine mark. Position 23 is a phosphoserine (serine 23). Residues serine 73–tryptophan 100 are compositionally biased toward polar residues. The interval serine 73 to leucine 116 is disordered. The segment covering lysine 104 to leucine 116 has biased composition (basic residues). Positions arginine 105 to valine 127 are interaction with CEBPA. Residues glycine 113–proline 195 mediate DNA binding. Residues aspartate 161–proline 195 carry the DEF box motif. The segment at asparagine 204–serine 277 is dimerization. Positions arginine 211–proline 327 are enhances binding of RB protein to E2F. The DCB1 stretch occupies residues glutamate 214–glutamine 246. Positions leucine 259–serine 315 are DCB2. The disordered stretch occupies residues glycine 370–aspartate 410. The segment covering alanine 373–arginine 385 has biased composition (polar residues). A compositionally biased stretch (acidic residues) spans glycine 394–aspartate 410.

The protein belongs to the E2F/DP family. As to quaternary structure, component of the E2F:DP transcription factor complex. Forms heterodimers with E2F family members. The complex can interact with hypophosphorylated retinoblastoma protein RB1 and related proteins (RBL1 and RBL2) that inhibit the E2F transactivation domain. This repression involves recruitment of histone deacetylase (HDAC). During the cell cycle, from mid-to-late G1 phase, RB family members become phosphorylated, detach from the DRTF1/E2F complex to render E2F transcriptionally active. Viral oncoproteins, notably E1A, T-antigen and HPV E7, are capable of sequestering RB protein, thus releasing the active complex. Part of the E2F6.com-1 complex in G0 phase is composed of E2F6, MGA, MAX, TFDP1, CBX3, BAT8, EUHMTASE1, RING1, RNF2, MBLR, L3MBTL2 YAF2. Component of the DREAM complex (also named LINC complex) at least composed of E2F4, E2F5, LIN9, LIN37, LIN52, LIN54, MYBL1, MYBL2, RBL1, RBL2, RBBP4, TFDP1 and TFDP2. The complex exists in quiescent cells where it represses cell cycle-dependent genes. It dissociates in S phase when LIN9, LIN37, LIN52 and LIN54 form a subcomplex that binds to MYBL2. The complex TFDP1:E2F1 interacts with CEBPA; the interaction prevents CEBPA binding to target gene promoters and represses its transcriptional activity. In terms of processing, phosphorylation by E2F1-bound cyclin A-CDK2, in the S phase, inhibits E2F-mediated DNA binding and transactivation. Ubiquitinated by the BCR(KBTBD5) complex, leading to its subsequent degradation. In terms of tissue distribution, highest levels in muscle. Also expressed in brain, placenta, liver and kidney. Lower levels in lung and pancreas. Not detected in heart.

The protein resides in the nucleus. It localises to the cytoplasm. Can stimulate E2F-dependent transcription. Binds DNA cooperatively with E2F family members through the E2 recognition site, 5'-TTTC[CG]CGC-3', found in the promoter region of a number of genes whose products are involved in cell cycle regulation or in DNA replication. The E2F1:DP complex appears to mediate both cell proliferation and apoptosis. Blocks adipocyte differentiation by repressing CEBPA binding to its target gene promoters. The polypeptide is Transcription factor Dp-1 (TFDP1) (Homo sapiens (Human)).